Here is a 110-residue protein sequence, read N- to C-terminus: Holo-[acyl-carrier-protein] synthase (110 aa).

Positions 8 and 54 each coordinate Mg(2+).

It belongs to the P-Pant transferase superfamily. AcpS family. Requires Mg(2+) as cofactor.

The protein resides in the cytoplasm. The catalysed reaction is apo-[ACP] + CoA = holo-[ACP] + adenosine 3',5'-bisphosphate + H(+). Its function is as follows. Transfers the 4'-phosphopantetheine moiety from coenzyme A to a Ser of acyl-carrier-protein. The sequence is that of Holo-[acyl-carrier-protein] synthase from Mycoplasma mycoides subsp. mycoides SC (strain CCUG 32753 / NCTC 10114 / PG1).